The primary structure comprises 345 residues: Beta-hexosaminidase (345 aa).

Residues D60, R68, R132, and 162–163 (KH) contribute to the substrate site. H175 serves as the catalytic Proton donor/acceptor. The Nucleophile role is filled by D247.

Belongs to the glycosyl hydrolase 3 family. NagZ subfamily.

Its subcellular location is the cytoplasm. It catalyses the reaction Hydrolysis of terminal non-reducing N-acetyl-D-hexosamine residues in N-acetyl-beta-D-hexosaminides.. It functions in the pathway cell wall biogenesis; peptidoglycan recycling. Functionally, plays a role in peptidoglycan recycling by cleaving the terminal beta-1,4-linked N-acetylglucosamine (GlcNAc) from peptide-linked peptidoglycan fragments, giving rise to free GlcNAc, anhydro-N-acetylmuramic acid and anhydro-N-acetylmuramic acid-linked peptides. This is Beta-hexosaminidase from Actinobacillus pleuropneumoniae serotype 5b (strain L20).